A 503-amino-acid chain; its full sequence is AMP phosphorylase (503 aa).

Residues G168, 194 to 199 (SRAITS), and T203 contribute to the AMP site. Catalysis depends on D256, which acts as the Proton donor. AMP is bound by residues S264 and K288.

The protein belongs to the thymidine/pyrimidine-nucleoside phosphorylase family. Type 2 subfamily.

It carries out the reaction AMP + phosphate = alpha-D-ribose 1,5-bisphosphate + adenine. The catalysed reaction is CMP + phosphate = cytosine + alpha-D-ribose 1,5-bisphosphate. The enzyme catalyses UMP + phosphate = alpha-D-ribose 1,5-bisphosphate + uracil. Its function is as follows. Catalyzes the conversion of AMP and phosphate to adenine and ribose 1,5-bisphosphate (R15P). Exhibits phosphorylase activity toward CMP and UMP in addition to AMP. Functions in an archaeal AMP degradation pathway, together with R15P isomerase and RubisCO. The protein is AMP phosphorylase of Pyrococcus furiosus (strain ATCC 43587 / DSM 3638 / JCM 8422 / Vc1).